A 353-amino-acid chain; its full sequence is tRNA-splicing endonuclease (353 aa).

Catalysis depends on residues Y289, H300, and K331.

It belongs to the tRNA-intron endonuclease family. Archaeal long subfamily. Homodimer.

The enzyme catalyses pretRNA = a 3'-half-tRNA molecule with a 5'-OH end + a 5'-half-tRNA molecule with a 2',3'-cyclic phosphate end + an intron with a 2',3'-cyclic phosphate and a 5'-hydroxyl terminus.. Endonuclease that removes tRNA introns. Cleaves pre-tRNA at the 5'- and 3'-splice sites to release the intron. The products are an intron and two tRNA half-molecules bearing 2',3' cyclic phosphate and 5'-OH termini. Recognizes a pseudosymmetric substrate in which 2 bulged loops of 3 bases are separated by a stem of 4 bp. This Methanosarcina mazei (strain ATCC BAA-159 / DSM 3647 / Goe1 / Go1 / JCM 11833 / OCM 88) (Methanosarcina frisia) protein is tRNA-splicing endonuclease.